A 736-amino-acid polypeptide reads, in one-letter code: 3',5'-cyclic-AMP phosphodiesterase 4B (736 aa).

Disordered stretches follow at residues 51–78 (QLPP…TTLP), 189–209 (LHGT…SRVN), and 282–301 (KQND…KKKK). S290 bears the Phosphoserine mark. A PDEase domain is found at 330 to 659 (VNTENEDHLA…NWYQSMIPQS (330 aa)). The active-site Proton donor is the H406. H406 lines the 3',5'-cyclic AMP pocket. Positions 406 and 410 each coordinate AMP. The Zn(2+) site is built by H410, H446, D447, and D564. The AMP site is built by D447, D564, Q615, and F618. Residue D447 participates in Mg(2+) binding. Residue D447 coordinates Mn(2+). Residues Q615 and F618 each contribute to the 3',5'-cyclic AMP site. Phosphoserine occurs at positions 659 and 661. Positions 685-736 (DEEDSEGPEKEGEGHSYFSSTKTLCVIDPENRDSLGETDIDIATEDKSPVDT) are disordered.

This sequence belongs to the cyclic nucleotide phosphodiesterase family. PDE4 subfamily. In terms of assembly, interacts with DISC1. Requires Zn(2+) as cofactor. Mg(2+) is required as a cofactor. The cofactor is Mn(2+). As to expression, expressed in brain, heart, lung and skeletal muscle. Expressed in white blood cells. In terms of tissue distribution, brain-specific isoform.

It is found in the cytoplasm. Its subcellular location is the cell membrane. It carries out the reaction 3',5'-cyclic AMP + H2O = AMP + H(+). Its pathway is purine metabolism; 3',5'-cyclic AMP degradation; AMP from 3',5'-cyclic AMP: step 1/1. Its activity is regulated as follows. Inhibited by rolipram. Hydrolyzes the second messenger cAMP, which is a key regulator of many important physiological processes. May be involved in mediating central nervous system effects of therapeutic agents ranging from antidepressants to antiasthmatic and anti-inflammatory agents. This Homo sapiens (Human) protein is 3',5'-cyclic-AMP phosphodiesterase 4B.